The primary structure comprises 127 residues: Glycine cleavage system H protein (127 aa).

The 82-residue stretch at 23–104 (TALVGLTDYA…PYEAWFAKIT (82 aa)) folds into the Lipoyl-binding domain. K64 is modified (N6-lipoyllysine).

It belongs to the GcvH family. In terms of assembly, the glycine cleavage system is composed of four proteins: P, T, L and H. The cofactor is (R)-lipoate.

The glycine cleavage system catalyzes the degradation of glycine. The H protein shuttles the methylamine group of glycine from the P protein to the T protein. This is Glycine cleavage system H protein from Lachnoclostridium phytofermentans (strain ATCC 700394 / DSM 18823 / ISDg) (Clostridium phytofermentans).